Reading from the N-terminus, the 578-residue chain is Asparagine synthetase [glutamine-hydrolyzing] 2 (578 aa).

Residue C2 is the For GATase activity of the active site. One can recognise a Glutamine amidotransferase type-2 domain in the interval 2–185 (CGILAVLGCI…PGHIYSSKQG (184 aa)). Residues 50–54 (RLAII), 75–77 (NGE), and D98 each bind L-glutamine. The Asparagine synthetase domain occupies 210–450 (LRNAFEKAVI…LPKHILYRQK (241 aa)). ATP contacts are provided by residues L231, I267, and 341 to 342 (SG).

Expressed in the vascular region adjacent to leaf mesophyll cells in the companion cell-sieve tube element complex.

The catalysed reaction is L-aspartate + L-glutamine + ATP + H2O = L-asparagine + L-glutamate + AMP + diphosphate + H(+). The protein operates within amino-acid biosynthesis; L-asparagine biosynthesis. Its function is as follows. Essential for nitrogen assimilation, distribution and remobilization within the plant via the phloem. This is Asparagine synthetase [glutamine-hydrolyzing] 2 (ASN2) from Arabidopsis thaliana (Mouse-ear cress).